Consider the following 490-residue polypeptide: 5'-3' exonuclease PLD3 (490 aa).

Over 1–38 the chain is Cytoplasmic; it reads MKPKLMYQELKVPAEEPANELPMNEIEAWKAAEKKARW. Residues 39-59 form a helical; Signal-anchor for type II membrane protein membrane-spanning segment; that stretch reads VLLVLILAVVGFGALMTQLFL. The Lumenal portion of the chain corresponds to 60–490; that stretch reads WEYGDLHLFG…DSVGNACRLL (431 aa). Intrachain disulfides connect Cys77-Cys239 and Cys81-Cys237. N-linked (GlcNAc...) asparagine glycosylation is found at Asn97 and Asn132. Residues 196-223 enclose the PLD phosphodiesterase 1 domain; the sequence is THGVLHTKFWVVDQTHFYLGSANMDWRS. Residues His201, Lys203, and Asp208 contribute to the active site. His201 (proton donor) is an active-site residue. Residues His201 and Lys203 each contribute to the phosphate site. A phosphate-binding site is contributed by Asn218. Residues Asn236, Asn284, and Asn387 are each glycosylated (N-linked (GlcNAc...) asparagine). A disulfide bridge connects residues Cys366 and Cys487. The PLD phosphodiesterase 2 domain maps to 411–437; sequence YARVNHNKYMVTERATYIGTSNWSGNY. His416 is a binding site for phosphate. The active-site Nucleophile is the His416. Mg(2+) is bound at residue Phe438.

Belongs to the phospholipase D family. As to quaternary structure, homodimer. Interacts with APP. N-glycosylated. In terms of processing, proteolytically processed to a soluble form that is stable within endosomes and lysosomes. During transport through the secretory pathway becomes proteolysed by cysteine proteases, thereby releasing a stable soluble lysosomal lumenal polypeptide, whereas the transmembrane-bound fragment is rapidly degraded. Its transport route to lysosomes involves ubiquitination and the ESCRT complex. Post-translationally, ubiquitinated. Ubiquitination mediates sorting into lysosomes.

It is found in the endoplasmic reticulum membrane. It localises to the lysosome lumen. Its subcellular location is the early endosome membrane. The protein localises to the late endosome membrane. The protein resides in the golgi apparatus membrane. It is found in the endosome membrane. The catalysed reaction is Exonucleolytic cleavage in the 5'- to 3'-direction to yield nucleoside 3'-phosphates.. The enzyme catalyses a 5'-end 5'-dephospho-ribonucleotidyl-ribonucleotide-RNA + H2O = a ribonucleoside 3'-phosphate + a 5'-end dephospho-ribonucleoside-RNA + H(+). It carries out the reaction a ribonucleoside 3'-phosphate-2'-3'-cyclophospho-GMP + H2O = a ribonucleoside 3'-phosphate + 2',3'-cyclophospho-GMP + H(+). It catalyses the reaction a 5'-end 5'-dephospho-2'-deoxyribonucleotidyl-2'-deoxyribonucleotide in single-stranded DNA + H2O = a 5'-end dephospho-2'-deoxyribonucleoside in single-stranded DNA + a 2'-deoxyribonucleoside 3'-phosphate + H(+). The catalysed reaction is a 5'-end 5'-phospho-2'-deoxyribonucleotide in single-stranded DNA + H2O = a 5'-end 5'-dephospho-2'-deoxyribonucleotide in single-stranded DNA + phosphate. The enzyme catalyses a 3-lyso-sn-glycero-1-phospho-(3'-acyl-1'-sn-glycerol) + a 1-acyl-sn-glycerol = a 3-acyl-sn-glycero-1-phospho-(3'-acyl-1'-sn-glycerol) + glycerol. It carries out the reaction 3-lyso-sn-glycero-1-phospho-(3'-(9Z-octadecenoyl)-1'-sn-glycerol) + 1-(9Z-octadecenoyl)-sn-glycerol = 3-(9Z-octadecenoyl)-sn-glycero-1-phospho-(3'-(9Z-octadecenoyl)-1'-sn-glycerol) + glycerol. Functionally, 5'-&gt;3' exonuclease that hydrolyzes the phosphodiester bond of single-stranded DNA (ssDNA) and RNA molecules to form nucleoside 3'-monophosphates and 5'-end 5'-hydroxy deoxyribonucleotide/ribonucleotide fragments. Partially redundant with PLD4, can cleave all four nucleotides displaying higher efficiency for ssDNA and RNA fragments initiated with uridine and guanosine residues and lower efficiency for cytidine-initiated substrates. As a result, it does not always degrade polynucleotides to the single nucleotide level, it can stall at specific sites sparing certain fragments from exonucleolytic degradation. Processes self and pathogenic ssDNA and RNA molecules that reach the endolysosomal compartment via phagocytosis or autophagy and may serve as 'danger' signals for recognition by innate immune receptors such as toll-like receptors (TLRs). Degrades mitochondrial CpG-rich ssDNA fragments to prevent TLR9 activation and autoinflammatory response, but it can cleave viral RNA to generate ligands for TLR7 activation and initiate antiviral immune responses. In plasmacytoid dendritic cells, it cooperates with endonuclease RNASET2 to release 2',3'-cyclic guanosine monophosphate (2',3'-cGMP), a potent stimulatory ligand for TLR7. Produces 2',3'-cGMPs and cytidine-rich RNA fragments that occupy TLR7 ligand-binding pockets and trigger a signaling-competent state. Can exert polynucleotide phosphatase activity toward 5'-phosphorylated ssDNA substrates although at a slow rate. Transphosphatidylase that catalyzes the exchange with R to S stereo-inversion of the glycerol moiety between (S,R)-lysophosphatidylglycerol (LPG) and monoacylglycerol (MAG) substrates to yield (S,S)-bis(monoacylglycero)phosphate (BMP). Can synthesize a variety of (S,S)-BMPs representing the main phospholipid constituent of lysosomal intralumenal vesicle (ILV) membranes that bind acid hydrolases for lipid degradation. Regulates the homeostasis and interorganellar communication of the endolysosomal system with an overall impact on cellular removal of dysfunctional organelles via autophagy as well as proper protein and lipid turnover. May play a role in myotube formation in response to ER stress. The sequence is that of 5'-3' exonuclease PLD3 (PLD3) from Macaca fascicularis (Crab-eating macaque).